The sequence spans 123 residues: UPF0102 protein Dole_2298 (123 aa).

The protein belongs to the UPF0102 family.

This Desulfosudis oleivorans (strain DSM 6200 / JCM 39069 / Hxd3) (Desulfococcus oleovorans) protein is UPF0102 protein Dole_2298.